The following is a 1179-amino-acid chain: ATP-dependent helicase/deoxyribonuclease subunit B (1179 aa).

This sequence belongs to the helicase family. AddB/RexB type 2 subfamily. Heterodimer of AddA and RexB. Requires Mg(2+) as cofactor.

The heterodimer acts as both an ATP-dependent DNA helicase and an ATP-dependent, dual-direction single-stranded exonuclease. Recognizes the chi site generating a DNA molecule suitable for the initiation of homologous recombination. This subunit has 5' -&gt; 3' nuclease activity but not helicase activity. This is ATP-dependent helicase/deoxyribonuclease subunit B from Lacticaseibacillus casei (strain BL23) (Lactobacillus casei).